The following is a 592-amino-acid chain: Bifunctional purine biosynthesis protein ATIC (592 aa).

Position 1 is an N-acetylmethionine (Met1). Positions 1–146 constitute an MGS-like domain; sequence MAPSQLALFS…KNHARVTVVC (146 aa). The segment at 1–198 is IMP cyclohydrolase; that stretch reads MAPSQLALFS…ISDYFRKQYS (198 aa). IMP-binding positions include 12 to 14, 34 to 37, 64 to 67, 101 to 102, and 125 to 126; these read SDK, SGGT, RVKT, CN, and DI. Lys137 (proton donor/acceptor; for FAICAR cyclization activity) is an active-site residue. An N6-acetyllysine modification is found at Lys199. The AICAR formyltransferase stretch occupies residues 199 to 592; it reads KGISQMPLRY…AHTDLRLFHH (394 aa). 5-amino-1-(5-phospho-beta-D-ribosyl)imidazole-4-carboxamide-binding positions include 207 to 208, His267, Gly316, Asp339, Asn431, and Arg451; that span reads RY. The active-site Proton acceptor; for AICAR formyltransferase activity is the His267. Residue Ile452 participates in (6R)-10-formyltetrahydrofolate binding. Phe541 contributes to the 5-amino-1-(5-phospho-beta-D-ribosyl)imidazole-4-carboxamide binding site. (6R)-10-formyltetrahydrofolate-binding positions include Asp546 and 565–566; that span reads ST. A 5-amino-1-(5-phospho-beta-D-ribosyl)imidazole-4-carboxamide-binding site is contributed by Arg588.

Belongs to the PurH family. In terms of assembly, homodimer. Associates with internalized INSR complexes on Golgi/endosomal membranes. Interacts with INSR; ATIC together with PRKAA2/AMPK2 and HACD3/PTPLAD1 is proposed to be part of a signaling network regulating INSR autophosphorylation and endocytosis.

The protein resides in the cytoplasm. It is found in the cytosol. It carries out the reaction (6R)-10-formyltetrahydrofolate + 5-amino-1-(5-phospho-beta-D-ribosyl)imidazole-4-carboxamide = 5-formamido-1-(5-phospho-D-ribosyl)imidazole-4-carboxamide + (6S)-5,6,7,8-tetrahydrofolate. The enzyme catalyses 10-formyldihydrofolate + 5-amino-1-(5-phospho-beta-D-ribosyl)imidazole-4-carboxamide = 5-formamido-1-(5-phospho-D-ribosyl)imidazole-4-carboxamide + 7,8-dihydrofolate. It catalyses the reaction IMP + H2O = 5-formamido-1-(5-phospho-D-ribosyl)imidazole-4-carboxamide. It participates in purine metabolism; IMP biosynthesis via de novo pathway; 5-formamido-1-(5-phospho-D-ribosyl)imidazole-4-carboxamide from 5-amino-1-(5-phospho-D-ribosyl)imidazole-4-carboxamide (10-formyl THF route): step 1/1. Its pathway is purine metabolism; IMP biosynthesis via de novo pathway; IMP from 5-formamido-1-(5-phospho-D-ribosyl)imidazole-4-carboxamide: step 1/1. AMP and XMP inhibit AICAR formyltransferase activity. AICAR formyltransferase activity is inhibited by N-(6-fluoro-1-oxo-1,2-dihydroisoquinolin-7-yl)-5- [(3R)-3-hydroxypyrrolidin-1-yl]thiophene-2-sulfonamide (LSN 3213128), which acts as a tumor suppression in cancer cell lines. In terms of biological role, bifunctional enzyme that catalyzes the last two steps of purine biosynthesis. Acts as a transformylase that incorporates a formyl group to the AMP analog AICAR (5-amino-1-(5-phospho-beta-D-ribosyl)imidazole-4-carboxamide) to produce the intermediate formyl-AICAR (FAICAR). Also displays cyclohydrolase activity involving the cyclization of FAICAR to inosine monophosphate (IMP). Can use both 10-formyldihydrofolate and 10-formyltetrahydrofolate as the formyl donor in this reaction. Also catalyzes the cyclization of FAICAR to IMP. Promotes insulin receptor/INSR autophosphorylation and is involved in INSR internalization. This Mus musculus (Mouse) protein is Bifunctional purine biosynthesis protein ATIC (Atic).